The primary structure comprises 329 residues: Formimidoylglutamase (329 aa).

Residues His133, Asp159, His161, Asp163, Asp253, and Asp255 each coordinate Mn(2+).

Belongs to the arginase family. The cofactor is Mn(2+).

It catalyses the reaction N-formimidoyl-L-glutamate + H2O = formamide + L-glutamate. Its pathway is amino-acid degradation; L-histidine degradation into L-glutamate; L-glutamate from N-formimidoyl-L-glutamate (hydrolase route): step 1/1. In terms of biological role, catalyzes the conversion of N-formimidoyl-L-glutamate to L-glutamate and formamide. The chain is Formimidoylglutamase from Streptococcus gordonii (strain Challis / ATCC 35105 / BCRC 15272 / CH1 / DL1 / V288).